Reading from the N-terminus, the 607-residue chain is DNA mismatch repair protein MutL (607 aa).

Positions 374–411 (RTEAGNEHVPSANRIQPPDPSIDMPDEPVPEQTDEPVA) are disordered. A compositionally biased stretch (acidic residues) spans 397–407 (MPDEPVPEQTD).

It belongs to the DNA mismatch repair MutL/HexB family.

In terms of biological role, this protein is involved in the repair of mismatches in DNA. It is required for dam-dependent methyl-directed DNA mismatch repair. May act as a 'molecular matchmaker', a protein that promotes the formation of a stable complex between two or more DNA-binding proteins in an ATP-dependent manner without itself being part of a final effector complex. This Exiguobacterium sibiricum (strain DSM 17290 / CCUG 55495 / CIP 109462 / JCM 13490 / 255-15) protein is DNA mismatch repair protein MutL.